The following is a 449-amino-acid chain: MLKYRGLENKNVLVIGLAKSGYEAAKLLNKLGANVIVNDGKDLSQDAHAIDLENEGIKVIGGEHPLSLLDSHPIIVKNPGIPYTVPLIEAAVEKGLTILTEVELSYLISEAPIIGVTGTNGKTTVTSLIGDMFQKSRVTGKLSGNIGYVASKVAQEVTADDYLVTELSSFQLLGIDQYKPHIAIITNIYSAHLDYHETLDNYQNAKKQIYKNQTENDYLICNYHQRHLIESETLRAKTYYFSTQQEVDGIYVKDDYIVFKGFRIIHKDDLVLPGEHNLENILAAVLAALLSGISVKAIIDSLTSFSGIEHRLQYIGTNKTNKYYNDSKATNTLATQFALDSFKQPIIWLCGGLDRGNDFDELIPHMKNVRMMVAFGETKEKFIKLGESQGKYVITANDVQDAVDKIQSVIEPNDVVLLSPACASWDQYNTFEERGNKFIKSFQANLPSF.

118-124 lines the ATP pocket; the sequence is GTNGKTT.

Belongs to the MurCDEF family.

The protein localises to the cytoplasm. It carries out the reaction UDP-N-acetyl-alpha-D-muramoyl-L-alanine + D-glutamate + ATP = UDP-N-acetyl-alpha-D-muramoyl-L-alanyl-D-glutamate + ADP + phosphate + H(+). It participates in cell wall biogenesis; peptidoglycan biosynthesis. In terms of biological role, cell wall formation. Catalyzes the addition of glutamate to the nucleotide precursor UDP-N-acetylmuramoyl-L-alanine (UMA). The protein is UDP-N-acetylmuramoylalanine--D-glutamate ligase of Staphylococcus saprophyticus subsp. saprophyticus (strain ATCC 15305 / DSM 20229 / NCIMB 8711 / NCTC 7292 / S-41).